The following is a 122-amino-acid chain: Large ribosomal subunit protein uL14 (122 aa).

Belongs to the universal ribosomal protein uL14 family. In terms of assembly, part of the 50S ribosomal subunit. Forms a cluster with proteins L3 and L19. In the 70S ribosome, L14 and L19 interact and together make contacts with the 16S rRNA in bridges B5 and B8.

In terms of biological role, binds to 23S rRNA. Forms part of two intersubunit bridges in the 70S ribosome. This is Large ribosomal subunit protein uL14 from Natranaerobius thermophilus (strain ATCC BAA-1301 / DSM 18059 / JW/NM-WN-LF).